The sequence spans 709 residues: DNA helicase/primase complex-associated protein (709 aa).

Positions 141–176 (SGDDGRDQQPPPVDGFGSEMEGEQTCPHAQRHSESP) are disordered.

Belongs to the herpesviridae HEPA family. In terms of assembly, associates with the primase and the helicase to form the helicase-primase complex. Interacts with the origin-binding protein. Interacts with the polymerase catalytic subunit.

The protein localises to the host nucleus. Functionally, component of the helicase/primase complex. Unwinds the DNA at the replication forks and generates single-stranded DNA for both leading and lagging strand synthesis. The primase synthesizes short RNA primers on the lagging strand that the polymerase presumably elongates using dNTPs. The primase-associated factor has no known catalytic activity in the complex and may serve to facilitate the formation of the replisome by directly interacting with the origin-binding protein and the polymerase. This chain is DNA helicase/primase complex-associated protein, found in Epstein-Barr virus (strain B95-8) (HHV-4).